Reading from the N-terminus, the 130-residue chain is Histone H2A.2 (130 aa).

2 positions are modified to N6-acetyllysine: Lys4 and Lys6. Gln104 bears the N5-methylglutamine mark. A Glycyl lysine isopeptide (Lys-Gly) (interchain with G-Cter in SUMO) cross-link involves residue Lys125. The residue at position 127 (Ser127) is a Phosphoserine. The [ST]-Q motif signature appears at 127–128; sequence SQ.

This sequence belongs to the histone H2A family. The nucleosome is a histone octamer containing two molecules each of H2A, H2B, H3 and H4 assembled in one H3-H4 heterotetramer and two H2A-H2B heterodimers. The octamer wraps approximately 147 bp of DNA. Post-translationally, phosphorylated to form H2AS128ph (gamma-H2A) in response to DNA double-strand breaks (DSBs) generated by exogenous genotoxic agents and by stalled replication forks. Phosphorylation is dependent on the DNA damage checkpoint kinases MEC1/ATR and TEL1/ATM, spreads on either side of a detected DSB site and may mark the surrounding chromatin for recruitment of proteins required for DNA damage signaling and repair. Gamma-H2A is removed from the DNA prior to the strand invasion-primer extension step of the repair process and subsequently dephosphorylated. Dephosphorylation is necessary for efficient recovery from the DNA damage checkpoint. In terms of processing, acetylated by ESA1 to form H2AK4ac and H2AK7ac.

The protein localises to the nucleus. The protein resides in the chromosome. In terms of biological role, core component of nucleosome which plays a central role in DNA double strand break (DSB) repair. Nucleosomes wrap and compact DNA into chromatin, limiting DNA accessibility to the cellular machineries which require DNA as a template. Histones thereby play a central role in transcription regulation, DNA repair, DNA replication and chromosomal stability. DNA accessibility is regulated via a complex set of post-translational modifications of histones, also called histone code, and nucleosome remodeling. This chain is Histone H2A.2 (HTA2), found in Meyerozyma guilliermondii (strain ATCC 6260 / CBS 566 / DSM 6381 / JCM 1539 / NBRC 10279 / NRRL Y-324) (Yeast).